A 156-amino-acid polypeptide reads, in one-letter code: Small ribosomal subunit protein uS7 (156 aa).

It belongs to the universal ribosomal protein uS7 family. As to quaternary structure, part of the 30S ribosomal subunit. Contacts proteins S9 and S11.

In terms of biological role, one of the primary rRNA binding proteins, it binds directly to 16S rRNA where it nucleates assembly of the head domain of the 30S subunit. Is located at the subunit interface close to the decoding center, probably blocks exit of the E-site tRNA. The polypeptide is Small ribosomal subunit protein uS7 (Synechococcus sp. (strain JA-2-3B'a(2-13)) (Cyanobacteria bacterium Yellowstone B-Prime)).